A 233-amino-acid chain; its full sequence is Lipoprotein-releasing system ATP-binding protein LolD (233 aa).

The region spanning 6–233 is the ABC transporter domain; that stretch reads LQCDNLCKRY…TAELSLMGAE (228 aa). 42 to 49 is a binding site for ATP; it reads GSSGSGKS.

The protein belongs to the ABC transporter superfamily. Lipoprotein translocase (TC 3.A.1.125) family. In terms of assembly, the complex is composed of two ATP-binding proteins (LolD) and two transmembrane proteins (LolC and LolE).

The protein resides in the cell inner membrane. Functionally, part of the ABC transporter complex LolCDE involved in the translocation of mature outer membrane-directed lipoproteins, from the inner membrane to the periplasmic chaperone, LolA. Responsible for the formation of the LolA-lipoprotein complex in an ATP-dependent manner. This chain is Lipoprotein-releasing system ATP-binding protein LolD, found in Escherichia coli O6:K15:H31 (strain 536 / UPEC).